The primary structure comprises 78 residues: Structural DNA-binding protein p10 (78 aa).

Low complexity predominate over residues 1–24 (MPTKAGTKSTANKKTTKGSSKSGS). Residues 1 to 41 (MPTKAGTKSTANKKTTKGSSKSGSPRGHTGKTHAPPSMHSG) are disordered.

It belongs to the asfivirus P10 family.

It localises to the virion. In terms of biological role, may play a role in genome packaging through direct interaction with viral DNA. Binds to ssDNA and dsDNA with the same apparent affinity in vitro. In African swine fever virus (isolate Tick/South Africa/Pretoriuskop Pr4/1996) (ASFV), this protein is Structural DNA-binding protein p10.